A 596-amino-acid chain; its full sequence is Nitrite reductase (596 aa).

Positions 1 to 29 (MRQRTPFARPGLLASAALALVLGPLAASA) are cleaved as a signal peptide. Residues 30 to 76 (QEQVAPPKDPAAALEDHKTRTDNRYEPSLDNLAQQDVAAPGAPEGVS) are N-terminal tail. Residue histidine 46 participates in heme c binding. Positions 54 and 57 each coordinate heme d1. The 86-residue stretch at 77–162 (ALSDAQYNEA…ANYLLLDPAA (86 aa)) folds into the Cytochrome c domain. Heme c is bound by residues cysteine 94, cysteine 97, histidine 98, lysine 108, and tyrosine 122. The heme d1 site is built by tryptophan 138, arginine 203, histidine 229, arginine 232, arginine 245, arginine 272, tyrosine 292, arginine 420, glutamine 536, and threonine 583. The tract at residues 163–596 (PPEFGMKEMR…NVYNTMTDTY (434 aa)) is D1-heme domain.

In terms of assembly, homodimer. Heme c is required as a cofactor. The cofactor is heme.

Its subcellular location is the periplasm. The enzyme catalyses nitric oxide + Fe(III)-[cytochrome c] + H2O = Fe(II)-[cytochrome c] + nitrite + 2 H(+). It catalyses the reaction A + NH4(+) + H2O = hydroxylamine + AH2 + H(+). This is Nitrite reductase (nirS) from Paracoccus pantotrophus (Thiosphaera pantotropha).